The chain runs to 216 residues: Large ribosomal subunit protein uL3 (216 aa).

It belongs to the universal ribosomal protein uL3 family. Part of the 50S ribosomal subunit. Forms a cluster with proteins L14 and L19.

Its function is as follows. One of the primary rRNA binding proteins, it binds directly near the 3'-end of the 23S rRNA, where it nucleates assembly of the 50S subunit. This chain is Large ribosomal subunit protein uL3, found in Symbiobacterium thermophilum (strain DSM 24528 / JCM 14929 / IAM 14863 / T).